The following is a 250-amino-acid chain: MAAGTSNYWEDLRKQARQLENELDLKLVSFSKLCTSYSHSSARDGGRDRYSSDTTPLLNGSSQDRMFETMAIEIEQLLARLTGVNDKMAEYTHSAGVPSLNAALMHTLQRHRDILQDYTHEFHKTKANFMAIRERENLMGSVRKDIESYKSGSGVNNRRTELFLKEHDHLRNSDRLIEETISIAMATKENMTSQRGMLKSIHSKMNTLANRFPAVNSLIQRINLRKRRDSLILGGVIGICTILLLLYAFH.

Residue Ala-2 is modified to N-acetylalanine. At 2–229 (AAGTSNYWED…QRINLRKRRD (228 aa)) the chain is on the cytoplasmic side. A coiled-coil region spans residues 9 to 30 (WEDLRKQARQLENELDLKLVSF). The segment at 37-59 (YSHSSARDGGRDRYSSDTTPLLN) is disordered. Residues 41-51 (SARDGGRDRYS) show a composition bias toward basic and acidic residues. The stretch at 68-95 (ETMAIEIEQLLARLTGVNDKMAEYTHSA) forms a coiled coil. At Ser-141 the chain carries Phosphoserine. Residues 230–250 (SLILGGVIGICTILLLLYAFH) form a helical; Anchor for type IV membrane protein membrane-spanning segment.

It belongs to the GOSR1 family. In terms of assembly, component of several multiprotein Golgi SNARE complexes. Identified in a SNARE complex with BET1, STX5 and YKT6, in a SNARE complex with BET1L, STX5 and YKT6, in a SNARE complex with STX5, GOSR2, SEC22B and BET1, and in complex with STX5 and COG3. Interacts with GABARAPL2. Interacts with the 34 kDa STX5 isoform.

Its subcellular location is the golgi apparatus membrane. Involved in transport from the ER to the Golgi apparatus as well as in intra-Golgi transport. It belongs to a super-family of proteins called t-SNAREs or soluble NSF (N-ethylmaleimide-sensitive factor) attachment protein receptor. May play a protective role against hydrogen peroxide induced cytotoxicity under glutathione depleted conditions in neuronal cells by regulating the intracellular ROS levels via inhibition of p38 MAPK (MAPK11, MAPK12, MAPK13 and MAPK14). Participates in docking and fusion stage of ER to cis-Golgi transport. Plays an important physiological role in VLDL-transport vesicle-Golgi fusion and thus in VLDL delivery to the hepatic cis-Golgi. This is Golgi SNAP receptor complex member 1 (Gosr1) from Rattus norvegicus (Rat).